The chain runs to 231 residues: Fibronectin type III domain-containing protein 4 (231 aa).

A signal peptide spans M1–A40. Residues D41–T163 lie on the Extracellular side of the membrane. In terms of domain architecture, Fibronectin type-III spans P43–G136. Residues N48 and N143 are each glycosylated (N-linked (GlcNAc...) asparagine). Residues G118 to D156 are disordered. The chain crosses the membrane as a helical span at residues G164 to C184. Topologically, residues R185–V231 are cytoplasmic. The segment covering N193 to G205 has biased composition (basic and acidic residues). The tract at residues N193–V231 is disordered.

In terms of tissue distribution, predominantly expressed in the liver and in the brain, including in the cortex, hypothalamus and hippocampus. Also expressed in heart, lung, kidney and testis. In the colon, expressed in the epithelium and in a subset of immune cells in lymphoid aggregates.

Its subcellular location is the membrane. It is found in the secreted. Functionally, has anti-inflammatory properties. In the colon, acts on macrophages to down-regulate inflammation. May suppress osteoclastogenesis and mature osteoclast resorptive function. In white adipose tissue, decreases local inflammation, via interaction with GPR116. Also required for proper systemic glucose tolerance, specifically sensitizing white adipocytes to insulin and promoting glucose uptake. The insulin sensitizing function in adipose tissue is mediated by interaction with ADGRF5/GPR116 and activation of cAMP signaling. The chain is Fibronectin type III domain-containing protein 4 (Fndc4) from Mus musculus (Mouse).